Reading from the N-terminus, the 340-residue chain is S-adenosylmethionine:tRNA ribosyltransferase-isomerase (340 aa).

The protein belongs to the QueA family. In terms of assembly, monomer.

It is found in the cytoplasm. The enzyme catalyses 7-aminomethyl-7-carbaguanosine(34) in tRNA + S-adenosyl-L-methionine = epoxyqueuosine(34) in tRNA + adenine + L-methionine + 2 H(+). Its pathway is tRNA modification; tRNA-queuosine biosynthesis. Transfers and isomerizes the ribose moiety from AdoMet to the 7-aminomethyl group of 7-deazaguanine (preQ1-tRNA) to give epoxyqueuosine (oQ-tRNA). The sequence is that of S-adenosylmethionine:tRNA ribosyltransferase-isomerase from Chlorobaculum parvum (strain DSM 263 / NCIMB 8327) (Chlorobium vibrioforme subsp. thiosulfatophilum).